A 1068-amino-acid polypeptide reads, in one-letter code: Protein AF-10 (1068 aa).

A PHD-type 1 zinc finger spans residues 22-74; it reads IGGCCVCSDERGWAENPLVYCDGHGCSVAVHQACYGIVQVPTGPWFCRKCESQ. The C2HC pre-PHD-type zinc-finger motif lies at 79–112; sequence RVRCELCPHKDGALKRTDNGGWAHVVCALYIPEV. The tract at residues 106 to 190 is required for interaction with histone H3; that stretch reads ALYIPEVQFA…EGNGADNVQY (85 aa). A PHD-type 2 zinc finger spans residues 135 to 198; sequence KTCYICDEQG…QYCGYCKYHF (64 aa). Positions 207–260 are disordered; it reads GSNRSYEQSLSDSSSHSQDKHHEKEKKKYKEKDKHKQKHKKQPEPSPALVPSLT. A Phosphoserine modification is found at Ser-217. Over residues 223 to 240 the composition is skewed to basic and acidic residues; that stretch reads SQDKHHEKEKKKYKEKDK. A Phosphoserine modification is found at Ser-252. Residue Lys-280 forms a Glycyl lysine isopeptide (Lys-Gly) (interchain with G-Cter in SUMO2) linkage. Residues 296 to 305 are compositionally biased toward polar residues; it reads EVSAHTSSGK. 2 disordered regions span residues 296-416 and 428-506; these read EVSA…SFSS and SQPK…SVAS. Residues 306 to 317 are compositionally biased toward basic and acidic residues; sequence DVSEARGSEGKG. Residues 340 to 351 are compositionally biased toward polar residues; that stretch reads TAVSASSPFPQG. Low complexity predominate over residues 352–372; that stretch reads SFSGTPGSVKSSSGSSVQSPQ. Composition is skewed to polar residues over residues 387–396, 404–416, and 428–446; these read YTHTQQPSST, SGSQ…SFSS, and SQPK…SSLP. The residue at position 436 (Ser-436) is a Phosphoserine. Basic residues predominate over residues 465-483; that stretch reads EKKRKGNKQSKHGPGRPKG. Residues 490–506 show a composition bias toward low complexity; that stretch reads VSHLSVSSASPTSSVAS. Residue Ser-532 is modified to Phosphoserine. Positions 583-594 are enriched in low complexity; the sequence is SGSGSSTPVSSS. Disordered stretches follow at residues 583-613 and 660-698; these read SGSG…LSPS and SESS…NLQL. Over residues 595-604 the composition is skewed to polar residues; the sequence is HIPQQSSGHL. A compositionally biased stretch (low complexity) spans 681-692; that stretch reads SSPRGSLSPRSP. A phosphoserine mark is found at Ser-686, Ser-688, and Ser-691. The segment at 752–780 is leucine-zipper; the sequence is LQVENRRLEEQIKNLTAKKERLQLLNAQL. Disordered stretches follow at residues 786–869 and 1040–1068; these read AITT…VSGV and PFLT…QEKS. Residues 787-816 show a composition bias toward polar residues; sequence ITTNPSPSHQMHTYTAQTAPPPDSLNSSKS. Low complexity-rich tracts occupy residues 836-850 and 857-869; these read LTSS…SALS and QSPA…VSGV. Residues 1040 to 1054 are compositionally biased toward polar residues; sequence PFLTIHGDSTSQKVT.

As to quaternary structure, self-associates. Interacts with FSTL3; the interaction enhances MLLT10 in vitro transcriptional activity and self-association. Interacts with YEATS4. Interacts with SS18. Interacts with DOT1L. Interacts with histone H3; interaction is necessary for MLLT10 binding to nucleosomes; interaction is inhibited by histone H3 'Lys-27' methylations (H3K27me1, H3K27me2 and H3K27me3) amd acetylation; interaction stabilizes association of MLLT10 at chromatin; interaction is essential for histone H3 'Lys-79' dimethylation (H3K79me2).

The protein resides in the nucleus. Functionally, probably involved in transcriptional regulation. Binds to cruciform DNA. In cells, binding to unmodified histone H3 regulates DOT1L functions including histone H3 'Lys-79' dimethylation (H3K79me2) and gene activation. The polypeptide is Protein AF-10 (Mus musculus (Mouse)).